We begin with the raw amino-acid sequence, 221 residues long: Imidazole glycerol phosphate synthase subunit HisH (221 aa).

One can recognise a Glutamine amidotransferase type-1 domain in the interval Asp9 to Gln221. Residue Cys84 is the Nucleophile of the active site. Active-site residues include His202 and Glu204.

Heterodimer of HisH and HisF.

It is found in the cytoplasm. The catalysed reaction is 5-[(5-phospho-1-deoxy-D-ribulos-1-ylimino)methylamino]-1-(5-phospho-beta-D-ribosyl)imidazole-4-carboxamide + L-glutamine = D-erythro-1-(imidazol-4-yl)glycerol 3-phosphate + 5-amino-1-(5-phospho-beta-D-ribosyl)imidazole-4-carboxamide + L-glutamate + H(+). It carries out the reaction L-glutamine + H2O = L-glutamate + NH4(+). It functions in the pathway amino-acid biosynthesis; L-histidine biosynthesis; L-histidine from 5-phospho-alpha-D-ribose 1-diphosphate: step 5/9. Functionally, IGPS catalyzes the conversion of PRFAR and glutamine to IGP, AICAR and glutamate. The HisH subunit catalyzes the hydrolysis of glutamine to glutamate and ammonia as part of the synthesis of IGP and AICAR. The resulting ammonia molecule is channeled to the active site of HisF. In Shewanella oneidensis (strain ATCC 700550 / JCM 31522 / CIP 106686 / LMG 19005 / NCIMB 14063 / MR-1), this protein is Imidazole glycerol phosphate synthase subunit HisH.